Consider the following 102-residue polypeptide: Small ribosomal subunit protein uS10 (102 aa).

It belongs to the universal ribosomal protein uS10 family. As to quaternary structure, part of the 30S ribosomal subunit.

Involved in the binding of tRNA to the ribosomes. The protein is Small ribosomal subunit protein uS10 of Kosmotoga olearia (strain ATCC BAA-1733 / DSM 21960 / TBF 19.5.1).